A 194-amino-acid chain; its full sequence is Probable RNA polymerase sigma factor HI_1459 (194 aa).

Residues 45-58 (DLVQEAFLSAFKNL) carry the Polymerase core binding motif. A DNA-binding region (H-T-H motif) is located at residues 161–180 (SEEICQETHLTSSNLHTTLY).

The protein belongs to the sigma-70 factor family. ECF subfamily.

This chain is Probable RNA polymerase sigma factor HI_1459, found in Haemophilus influenzae (strain ATCC 51907 / DSM 11121 / KW20 / Rd).